Reading from the N-terminus, the 231-residue chain is Uroporphyrinogen-III C-methyltransferase (231 aa).

S-adenosyl-L-homocysteine contacts are provided by residues P10, 85–87 (GGD), 115–116 (TS), M166, and A218.

It belongs to the precorrin methyltransferase family. In terms of assembly, homodimer.

It catalyses the reaction uroporphyrinogen III + 2 S-adenosyl-L-methionine = precorrin-2 + 2 S-adenosyl-L-homocysteine + H(+). The catalysed reaction is uroporphyrinogen III + S-adenosyl-L-methionine = precorrin-1 + S-adenosyl-L-homocysteine + H(+). It carries out the reaction precorrin-1 + S-adenosyl-L-methionine = precorrin-2 + S-adenosyl-L-homocysteine. Its pathway is cofactor biosynthesis; adenosylcobalamin biosynthesis; precorrin-2 from uroporphyrinogen III: step 1/1. Does not show substrate inhibition at uroporphyrinogen III concentrations of up to 20 uM, in contrast to SUMT from Sinorhizobium (previously believed to be P.denitrificans). Its function is as follows. Catalyzes the two successive C-2 and C-7 methylation reactions involved in the conversion of uroporphyrinogen III to precorrin-2 via the intermediate formation of precorrin-1. It is a step in the biosynthesis of both cobalamin (vitamin B12) and coenzyme F430. This is Uroporphyrinogen-III C-methyltransferase (cobA) from Methanobacterium ivanovii.